We begin with the raw amino-acid sequence, 335 residues long: Anthranilate phosphoribosyltransferase (335 aa).

Residues Gly79, 82–83 (GD), Thr87, 89–92 (NVST), 107–115 (KHGSRSVSS), and Ser119 each bind 5-phospho-alpha-D-ribose 1-diphosphate. Position 79 (Gly79) interacts with anthranilate. Ser91 is a Mg(2+) binding site. Arg165 contributes to the anthranilate binding site. Residues Asp223 and Glu224 each coordinate Mg(2+).

Belongs to the anthranilate phosphoribosyltransferase family. Homodimer. Mg(2+) serves as cofactor.

It catalyses the reaction N-(5-phospho-beta-D-ribosyl)anthranilate + diphosphate = 5-phospho-alpha-D-ribose 1-diphosphate + anthranilate. It functions in the pathway amino-acid biosynthesis; L-tryptophan biosynthesis; L-tryptophan from chorismate: step 2/5. Functionally, catalyzes the transfer of the phosphoribosyl group of 5-phosphorylribose-1-pyrophosphate (PRPP) to anthranilate to yield N-(5'-phosphoribosyl)-anthranilate (PRA). This chain is Anthranilate phosphoribosyltransferase, found in Helicobacter pylori (strain HPAG1).